The sequence spans 330 residues: Syntaxin-121 (330 aa).

Positions 1 to 10 are enriched in polar residues; sequence MNNLFSSSWK. The tract at residues 1-39 is disordered; it reads MNNLFSSSWKRTGGGGGGDGDIESGGGVEMAPPPGAAAG. Over 1–284 the chain is Cytoplasmic; sequence MNNLFSSSWK…RKHQKSTRKW (284 aa). Gly residues predominate over residues 12-28; it reads TGGGGGGDGDIESGGGV. Positions 212 to 274 constitute a t-SNARE coiled-coil homology domain; that stretch reads VAEIQERHGA…DRGREQLVVA (63 aa). A helical; Anchor for type IV membrane protein membrane pass occupies residues 285 to 305; that stretch reads TCIAIIILLVLILVVVLPIVL. Over 306 to 330 the chain is Vesicular; it reads KFVNNNKSSSSSPAPATPSPPPPTA. The segment at 311 to 330 is disordered; it reads NKSSSSSPAPATPSPPPPTA. The segment covering 320 to 330 has biased composition (pro residues); it reads PATPSPPPPTA.

Belongs to the syntaxin family. Interacts with SNAP32. In terms of tissue distribution, expressed in roots, stems, leaf blades and leaf sheaths.

Its subcellular location is the cell membrane. Vesicle trafficking protein that functions in the secretory pathway. Involved in plant defense by mediating host resistance to the rice blast fungus Magnaporthe oryzae. The interaction with SNAP32 may contribute to host resistance to the rice blast fungus. The sequence is that of Syntaxin-121 from Oryza sativa subsp. japonica (Rice).